Consider the following 77-residue polypeptide: Acyl carrier protein (77 aa).

The 76-residue stretch at 2 to 77 (SDVADRVKKI…DAVKFISEAS (76 aa)) folds into the Carrier domain. Ser-37 is modified (O-(pantetheine 4'-phosphoryl)serine).

Belongs to the acyl carrier protein (ACP) family. In terms of processing, 4'-phosphopantetheine is transferred from CoA to a specific serine of apo-ACP by AcpS. This modification is essential for activity because fatty acids are bound in thioester linkage to the sulfhydryl of the prosthetic group.

The protein localises to the cytoplasm. Its pathway is lipid metabolism; fatty acid biosynthesis. Carrier of the growing fatty acid chain in fatty acid biosynthesis. This Ruegeria pomeroyi (strain ATCC 700808 / DSM 15171 / DSS-3) (Silicibacter pomeroyi) protein is Acyl carrier protein.